The primary structure comprises 394 residues: MNRKVLALLVPALLVAGAANAAEIYNKNGNKLDLYGKVDGLRYFSDNAGDDGDQSYARIGFKGETQINDMLTGYGQWEYNIKVNTTEGEGANSWTRLGFAGLKFGEYGSFDYGRNYGVIYDIEAWTDALPEFGGDTYTQTDVYMLGRTNGVATYRNTDFFGLVEGLNFALQYQGNNENGGAGAGEGTGNGGNRKLARENGDGFGMSTSYDFDFGLSLGAAYSSSDRSDNQVARGYGDGMNERNNYAGGETAEAWTIGAKYDAYNVYLAAMYAETRNMTYYGGGNGEGNGSIANKTQNFEVVAQYQFDFGLRPSIAYLQSKGKDLGGQEVHRGNWRYTDKDLVKYVDVGMTYYFNKNMSTYVDYKINLLDEDDDFYANNGIATDDIVGVGLVYQF.

The N-terminal stretch at 1-21 (MNRKVLALLVPALLVAGAANA) is a signal peptide. Residues 222-242 (SSSDRSDNQVARGYGDGMNER) are disordered.

It belongs to the Gram-negative porin family. Homotrimer.

It localises to the cell outer membrane. Forms pores that allow passive diffusion of small molecules across the outer membrane. This is Outer membrane protein S1 (ompS1) from Salmonella typhi.